Reading from the N-terminus, the 371-residue chain is Queuine tRNA-ribosyltransferase (371 aa).

Aspartate 90 acts as the Proton acceptor in catalysis. Substrate-binding positions include 90–94, aspartate 144, glutamine 189, and glycine 215; that span reads DSGGF. Positions 246–252 are RNA binding; sequence GVGTPEN. Aspartate 265 functions as the Nucleophile in the catalytic mechanism. Residues 270–274 are RNA binding; important for wobble base 34 recognition; sequence TRNAR. Residues cysteine 303, cysteine 305, cysteine 308, and histidine 334 each coordinate Zn(2+).

Belongs to the queuine tRNA-ribosyltransferase family. In terms of assembly, homodimer. Within each dimer, one monomer is responsible for RNA recognition and catalysis, while the other monomer binds to the replacement base PreQ1. It depends on Zn(2+) as a cofactor.

It carries out the reaction 7-aminomethyl-7-carbaguanine + guanosine(34) in tRNA = 7-aminomethyl-7-carbaguanosine(34) in tRNA + guanine. It participates in tRNA modification; tRNA-queuosine biosynthesis. Catalyzes the base-exchange of a guanine (G) residue with the queuine precursor 7-aminomethyl-7-deazaguanine (PreQ1) at position 34 (anticodon wobble position) in tRNAs with GU(N) anticodons (tRNA-Asp, -Asn, -His and -Tyr). Catalysis occurs through a double-displacement mechanism. The nucleophile active site attacks the C1' of nucleotide 34 to detach the guanine base from the RNA, forming a covalent enzyme-RNA intermediate. The proton acceptor active site deprotonates the incoming PreQ1, allowing a nucleophilic attack on the C1' of the ribose to form the product. After dissociation, two additional enzymatic reactions on the tRNA convert PreQ1 to queuine (Q), resulting in the hypermodified nucleoside queuosine (7-(((4,5-cis-dihydroxy-2-cyclopenten-1-yl)amino)methyl)-7-deazaguanosine). The chain is Queuine tRNA-ribosyltransferase from Helicobacter pylori (strain G27).